The following is a 233-amino-acid chain: Chromosome partition protein MukE (233 aa).

Positions 207 to 233 (SLSLHDESDDADVTMGNAADSVEDEQE) are disordered.

This sequence belongs to the MukE family. In terms of assembly, interacts, and probably forms a ternary complex, with MukF and MukB. The complex formation is stimulated by calcium or magnesium.

It is found in the cytoplasm. It localises to the nucleoid. Functionally, involved in chromosome condensation, segregation and cell cycle progression. May participate in facilitating chromosome segregation by condensation DNA from both sides of a centrally located replisome during cell division. Probably acts via its interaction with MukB and MukF. The protein is Chromosome partition protein MukE of Yersinia pestis.